Consider the following 400-residue polypeptide: Phosphoglycerate kinase (400 aa).

Substrate contacts are provided by residues 19–21, Arg38, 61–64, Arg124, and Arg161; these read DLN and HLGR. Residues Lys211, Gly299, Glu330, and 356–359 contribute to the ATP site; that span reads GGDS.

This sequence belongs to the phosphoglycerate kinase family. As to quaternary structure, monomer.

The protein localises to the cytoplasm. It carries out the reaction (2R)-3-phosphoglycerate + ATP = (2R)-3-phospho-glyceroyl phosphate + ADP. It functions in the pathway carbohydrate degradation; glycolysis; pyruvate from D-glyceraldehyde 3-phosphate: step 2/5. The polypeptide is Phosphoglycerate kinase (Parafrankia sp. (strain EAN1pec)).